Consider the following 106-residue polypeptide: uncharacterized protein (106 aa).

A run of 2 helical transmembrane segments spans residues 46-68 (LLQE…ILAF) and 73-92 (AVFI…LIAA).

It localises to the cell membrane. This is an uncharacterized protein from Bacillus subtilis (strain 168).